The primary structure comprises 272 residues: HMP-PP phosphatase (272 aa).

Asp-8 (nucleophile) is an active-site residue. Mg(2+)-binding residues include Asp-8, Asp-10, and Asp-212.

Belongs to the HAD-like hydrolase superfamily. Cof family. Mg(2+) serves as cofactor.

It carries out the reaction 4-amino-2-methyl-5-(diphosphooxymethyl)pyrimidine + H2O = 4-amino-2-methyl-5-(phosphooxymethyl)pyrimidine + phosphate + H(+). Functionally, catalyzes the hydrolysis of 4-amino-2-methyl-5-hydroxymethylpyrimidine pyrophosphate (HMP-PP) to 4-amino-2-methyl-5-hydroxymethylpyrimidine phosphate (HMP-P). The polypeptide is HMP-PP phosphatase (Escherichia coli (strain UTI89 / UPEC)).